A 245-amino-acid chain; its full sequence is tRNA pseudouridine synthase A 2 (245 aa).

The active-site Nucleophile is Asp53. Tyr111 contacts substrate.

Belongs to the tRNA pseudouridine synthase TruA family. In terms of assembly, homodimer.

The catalysed reaction is uridine(38/39/40) in tRNA = pseudouridine(38/39/40) in tRNA. Functionally, formation of pseudouridine at positions 38, 39 and 40 in the anticodon stem and loop of transfer RNAs. The chain is tRNA pseudouridine synthase A 2 from Bacillus cereus (strain ZK / E33L).